Reading from the N-terminus, the 759-residue chain is GTPase-activating protein rrc-1 (759 aa).

The region spanning 164–243 is the SH3 domain; the sequence is PAIAAAVVTK…PRDCVMLIDD (80 aa). The 194-residue stretch at 280 to 473 folds into the Rho-GAP domain; sequence LELTDLYMRT…FFIENSESLF (194 aa). A disordered region spans residues 591–624; that stretch reads ARSMRPTSRPPPSPRTRRARFSNGSSNNVQKLNE. The segment covering 612–622 has biased composition (polar residues); sequence SNGSSNNVQKL.

Expressed in coelomocytes, excretory cells, uterine-seam cells and GLR cells.

Functionally, functions as a GTPase-activating protein (GAP) for ced-10/rac-1 and CDC42. The polypeptide is GTPase-activating protein rrc-1 (rrc-1) (Caenorhabditis elegans).